We begin with the raw amino-acid sequence, 206 residues long: Transcription antitermination protein NusB (206 aa).

Positions 135–206 are disordered; it reads ARGEKTSAQE…ETQPPGVNEV (72 aa). The span at 169–180 shows a compositional bias: low complexity; it reads ATPATTPVTTTV.

Belongs to the NusB family.

In terms of biological role, involved in transcription antitermination. Required for transcription of ribosomal RNA (rRNA) genes. Binds specifically to the boxA antiterminator sequence of the ribosomal RNA (rrn) operons. The protein is Transcription antitermination protein NusB of Heliobacterium modesticaldum (strain ATCC 51547 / Ice1).